The chain runs to 88 residues: Small ribosomal subunit protein bS16c (88 aa).

The protein belongs to the bacterial ribosomal protein bS16 family.

The protein resides in the plastid. It is found in the chloroplast. In Oenothera elata subsp. hookeri (Hooker's evening primrose), this protein is Small ribosomal subunit protein bS16c.